Here is a 560-residue protein sequence, read N- to C-terminus: NAD-dependent malic enzyme (560 aa).

The active-site Proton donor is Tyr100. Arg153 lines the NAD(+) pocket. Lys171 acts as the Proton acceptor in catalysis. 3 residues coordinate a divalent metal cation: Glu242, Asp243, and Asp266. Residues Asp266 and Asn413 each coordinate NAD(+).

The protein belongs to the malic enzymes family. As to quaternary structure, homotetramer. Mg(2+) serves as cofactor. It depends on Mn(2+) as a cofactor.

It catalyses the reaction (S)-malate + NAD(+) = pyruvate + CO2 + NADH. The enzyme catalyses oxaloacetate + H(+) = pyruvate + CO2. The chain is NAD-dependent malic enzyme from Psychromonas ingrahamii (strain DSM 17664 / CCUG 51855 / 37).